The following is a 558-amino-acid chain: MSLSKEVKSFQWTQALRRELQSFTSDVKAAVIKDATNLLNGLDFSEVSNVQRIMRKEKRDDKDLQRLRSLNQTVHSLVDLKSTSKKNVLKVGRLSAEELMSLAADLEKLKAKIMRSERPQASGVYMGNLTTQQLDQRSQILQIVGMRKPQQGASGVVRVWDVKDSSLLNNQFGTMPSLTMACMAKQSQTPLNDVVQALTDLGLLYTVKYPNLNDLERLKDKHPVLGVITEQQSSINISGYNFSLGAAVKAGAALLDGGNMLESILIKPSNSEDLLKAVLGAKRKLNMFVSDQVGDRNPYENILYKVCLSGEGWPYIACRTSIVGRAWENTTIDLTSEKPAVNSPRPAPGAAGPPQVGLSYSQTMLLKDLMGGIDPNAPTWIDIEGRFNDPVEIAIFQPQNGQFIHFYREPVDQKQFKQDSKYSHGMDLADLFNAQPGLTSSVIGALPQGMVLSCQGSDDIRKLLDSQNRKDIKLIDVEMTREASREYEDKVWDKYGWLCKMHTGIVRDKKKKEITPHCALMDCIIFESASKARLPDLKTVHNILPHDLIFRGPNVVTL.

The interval 54-237 (MRKEKRDDKD…ITEQQSSINI (184 aa)) is binding site for the cap structure m7GTP. Mg(2+) contacts are provided by Asp382 and Glu384. Residues Asp382 and Glu384 each contribute to the Mn(2+) site. Positions 392, 499, 502, and 518 each coordinate Zn(2+). Position 522 (Asp522) interacts with Mg(2+). Residue Asp522 coordinates Mn(2+).

The protein belongs to the arenaviridae nucleocapsid protein family. In terms of assembly, homomultimerizes to form the nucleocapsid. Binds to viral genomic RNA. Interacts with glycoprotein G2. Interacts with protein Z; this interaction probably directs the encapsidated genome to budding sites. Interacts with protein L; this interaction does not interfere with Z-L interaction. Interacts with host IKBKE (via Protein kinase domain); the interaction inhibits IKBKE kinase activity.

It is found in the virion. The protein localises to the host cytoplasm. Its function is as follows. Encapsidates the genome, protecting it from nucleases. The encapsidated genomic RNA is termed the nucleocapsid (NC). Serves as template for viral transcription and replication. The increased presence of protein N in host cell does not seem to trigger the switch from transcription to replication as observed in other negative strain RNA viruses. Through the interaction with host IKBKE, strongly inhibits the phosphorylation and nuclear translocation of host IRF3, a protein involved in interferon activation pathway, leading to the inhibition of interferon-beta and IRF3-dependent promoters activation. Also encodes a functional 3'-5' exoribonuclease that degrades preferentially dsRNA substrates and thereby participates in the suppression of interferon induction. The polypeptide is Nucleoprotein (Lymphocytic choriomeningitis virus (strain Armstrong) (LCMV)).